We begin with the raw amino-acid sequence, 282 residues long: Acetylglutamate kinase (282 aa).

Residues 62-63 (GG), Arg84, and Asn178 contribute to the substrate site.

This sequence belongs to the acetylglutamate kinase family. ArgB subfamily.

The protein resides in the cytoplasm. It carries out the reaction N-acetyl-L-glutamate + ATP = N-acetyl-L-glutamyl 5-phosphate + ADP. It participates in amino-acid biosynthesis; L-arginine biosynthesis; N(2)-acetyl-L-ornithine from L-glutamate: step 2/4. Its function is as follows. Catalyzes the ATP-dependent phosphorylation of N-acetyl-L-glutamate. The protein is Acetylglutamate kinase of Thermotoga petrophila (strain ATCC BAA-488 / DSM 13995 / JCM 10881 / RKU-1).